The primary structure comprises 392 residues: FK506-binding protein 4 (392 aa).

Disordered stretches follow at residues 58–116 (NPEL…NEID) and 161–284 (GNYV…PKTK). 3 stretches are compositionally biased toward acidic residues: residues 73–86 (DGLE…EQEA), 104–116 (SESE…NEID), and 172–219 (SDSD…DASD). Phosphoserine is present on residues Ser80 and Ser82. Composition is skewed to basic and acidic residues over residues 220–234 (IESR…DEKK) and 252–279 (SAKP…ESKP). In terms of domain architecture, PPIase FKBP-type spans 306 to 392 (GTRVGMRYVG…TFDVKLVSMK (87 aa)).

This sequence belongs to the FKBP-type PPIase family. FKBP3/4 subfamily. As to quaternary structure, binds to histones H3 and H4. Interacts with NOP53.

The protein localises to the nucleus. It carries out the reaction [protein]-peptidylproline (omega=180) = [protein]-peptidylproline (omega=0). Its function is as follows. PPIase that acts as a histone chaperone. Histone proline isomerase that increases the rate of cis-trans isomerization at 'Pro-17' (H3P16), 'Pro-31' (H3P30) and 'Pro-39 (H3P38) on the histone H3 N-terminal tail. H3P16 and H3P30 are the major proline targets with little activity shown against H3P38. H3P38 isomerization influences SET2-mediated H3K36 methylation thereby regulating gene expression. In Saccharomyces cerevisiae (strain ATCC 204508 / S288c) (Baker's yeast), this protein is FK506-binding protein 4.